The sequence spans 137 residues: Large ribosomal subunit protein uL16 (137 aa).

The protein belongs to the universal ribosomal protein uL16 family. Part of the 50S ribosomal subunit.

Binds 23S rRNA and is also seen to make contacts with the A and possibly P site tRNAs. In Pseudomonas syringae pv. tomato (strain ATCC BAA-871 / DC3000), this protein is Large ribosomal subunit protein uL16.